Reading from the N-terminus, the 141-residue chain is Hemoglobin subunit alpha (141 aa).

Residues 1–141 form the Globin domain; the sequence is VLSPADKTNV…VSTVLTSKYR (141 aa). S3 carries the phosphoserine modification. N6-succinyllysine is present on K7. T8 carries the phosphothreonine modification. An N6-succinyllysine modification is found at K11. K16 carries the N6-acetyllysine; alternate modification. The residue at position 16 (K16) is an N6-succinyllysine; alternate. At Y24 the chain carries Phosphotyrosine. S35 bears the Phosphoserine mark. At K40 the chain carries N6-succinyllysine. S49 carries the post-translational modification Phosphoserine. Position 58 (H58) interacts with O2. Residue H87 participates in heme b binding. S102 bears the Phosphoserine mark. T108 carries the phosphothreonine modification. A phosphoserine mark is found at S124 and S131. T134 and T137 each carry phosphothreonine. Residue S138 is modified to Phosphoserine.

Belongs to the globin family. In terms of assembly, heterotetramer of two alpha chains and two beta chains. In terms of tissue distribution, red blood cells.

Its function is as follows. Involved in oxygen transport from the lung to the various peripheral tissues. Hemopressin acts as an antagonist peptide of the cannabinoid receptor CNR1. Hemopressin-binding efficiently blocks cannabinoid receptor CNR1 and subsequent signaling. The sequence is that of Hemoglobin subunit alpha (HBA) from Semnopithecus entellus (Northern plains gray langur).